The primary structure comprises 118 residues: Ribosome-binding factor A (118 aa).

The protein belongs to the RbfA family. As to quaternary structure, monomer. Binds 30S ribosomal subunits, but not 50S ribosomal subunits or 70S ribosomes.

It localises to the cytoplasm. Its function is as follows. One of several proteins that assist in the late maturation steps of the functional core of the 30S ribosomal subunit. Associates with free 30S ribosomal subunits (but not with 30S subunits that are part of 70S ribosomes or polysomes). Required for efficient processing of 16S rRNA. May interact with the 5'-terminal helix region of 16S rRNA. The polypeptide is Ribosome-binding factor A (Bacillus cereus (strain ATCC 10987 / NRS 248)).